Reading from the N-terminus, the 331-residue chain is Undecaprenyl-phosphate 4-deoxy-4-formamido-L-arabinose transferase (331 aa).

The next 2 helical transmembrane spans lie at 236-256 and 270-290; these read LSIV…FLIL and VFPL…GLGL.

This sequence belongs to the glycosyltransferase 2 family.

It localises to the cell inner membrane. It carries out the reaction UDP-4-deoxy-4-formamido-beta-L-arabinose + di-trans,octa-cis-undecaprenyl phosphate = 4-deoxy-4-formamido-alpha-L-arabinopyranosyl di-trans,octa-cis-undecaprenyl phosphate + UDP. The protein operates within glycolipid biosynthesis; 4-amino-4-deoxy-alpha-L-arabinose undecaprenyl phosphate biosynthesis; 4-amino-4-deoxy-alpha-L-arabinose undecaprenyl phosphate from UDP-4-deoxy-4-formamido-beta-L-arabinose and undecaprenyl phosphate: step 1/2. It participates in bacterial outer membrane biogenesis; lipopolysaccharide biosynthesis. In terms of biological role, catalyzes the transfer of 4-deoxy-4-formamido-L-arabinose from UDP to undecaprenyl phosphate. The modified arabinose is attached to lipid A and is required for resistance to polymyxin and cationic antimicrobial peptides. This chain is Undecaprenyl-phosphate 4-deoxy-4-formamido-L-arabinose transferase, found in Shewanella sediminis (strain HAW-EB3).